Here is a 94-residue protein sequence, read N- to C-terminus: Integration host factor subunit beta (94 aa).

This sequence belongs to the bacterial histone-like protein family. Heterodimer of an alpha and a beta chain.

Functionally, this protein is one of the two subunits of integration host factor, a specific DNA-binding protein that functions in genetic recombination as well as in transcriptional and translational control. In Sodalis glossinidius (strain morsitans), this protein is Integration host factor subunit beta.